A 343-amino-acid chain; its full sequence is Small ribosomal subunit biogenesis GTPase RsgA (343 aa).

The region spanning 116–275 (RGQLKPVAAN…LIDSPGIREF (160 aa)) is the CP-type G domain. GTP-binding positions include 163–166 (NKAD) and 217–225 (GQSGVGKSS). 4 residues coordinate Zn(2+): Cys-299, Cys-304, His-306, and Cys-312.

It belongs to the TRAFAC class YlqF/YawG GTPase family. RsgA subfamily. In terms of assembly, monomer. Associates with 30S ribosomal subunit, binds 16S rRNA. Requires Zn(2+) as cofactor.

The protein localises to the cytoplasm. In terms of biological role, one of several proteins that assist in the late maturation steps of the functional core of the 30S ribosomal subunit. Helps release RbfA from mature subunits. May play a role in the assembly of ribosomal proteins into the subunit. Circularly permuted GTPase that catalyzes slow GTP hydrolysis, GTPase activity is stimulated by the 30S ribosomal subunit. The polypeptide is Small ribosomal subunit biogenesis GTPase RsgA (Pseudomonas fluorescens (strain ATCC BAA-477 / NRRL B-23932 / Pf-5)).